Reading from the N-terminus, the 515-residue chain is Glucose-6-phosphate 1-dehydrogenase (515 aa).

An N-acetylalanine modification is found at Ala2. Phosphoserine is present on Ser8. Thr10 carries the post-translational modification Phosphothreonine. Residues 38-45 and Arg72 contribute to the NADP(+) site; that span reads GASGDLAK. Lys89 carries the post-translational modification N6-acetyllysine. Positions 147 and 171 each coordinate NADP(+). Residues Lys171, 201–205, Glu239, and Asp258 contribute to the D-glucose 6-phosphate site; that span reads HYLGK. Lys171 carries the N6-(2-hydroxyisobutyryl)lysine; alternate modification. Lys171 carries the N6-acetyllysine; alternate modification. His263 acts as the Proton acceptor in catalysis. Residue Arg357 coordinates NADP(+). Residues Lys360 and Arg365 each coordinate D-glucose 6-phosphate. 3 residues coordinate NADP(+): Lys366, Arg370, and Arg393. Gln395 is a D-glucose 6-phosphate binding site. NADP(+) contacts are provided by residues 401–403 and 421–423; these read YTK and DLT. An N6-acetyllysine modification is found at Lys403. N6-acetyllysine is present on Lys432. NADP(+) is bound at residue Arg487. Lys497 bears the N6-acetyllysine mark. NADP(+) is bound by residues Tyr503 and Trp509. At Tyr503 the chain carries Phosphotyrosine.

Belongs to the glucose-6-phosphate dehydrogenase family. As to quaternary structure, homotetramer; dimer of dimers. Interacts with SIRT2; the interaction is enhanced by H(2)O(2) treatment. Forms a ternary complex with ALDOB and TP53; this interaction is direct. ALDOB stabilizes the complex inhibiting G6PD activity and keeping oxidative pentose phosphate metabolism in check. Acetylated by ELP3 at Lys-403; acetylation inhibits its homodimerization and enzyme activity. Deacetylated by SIRT2 at Lys-403; deacetylation stimulates its enzyme activity.

It localises to the cytoplasm. It is found in the cytosol. The protein localises to the membrane. It catalyses the reaction D-glucose 6-phosphate + NADP(+) = 6-phospho-D-glucono-1,5-lactone + NADPH + H(+). The protein operates within carbohydrate degradation; pentose phosphate pathway; D-ribulose 5-phosphate from D-glucose 6-phosphate (oxidative stage): step 1/3. Its function is as follows. Cytosolic glucose-6-phosphate dehydrogenase that catalyzes the first and rate-limiting step of the oxidative branch within the pentose phosphate pathway/shunt, an alternative route to glycolysis for the dissimilation of carbohydrates and a major source of reducing power and metabolic intermediates for fatty acid and nucleic acid biosynthetic processes. This Cricetulus griseus (Chinese hamster) protein is Glucose-6-phosphate 1-dehydrogenase (G6PD).